A 163-amino-acid polypeptide reads, in one-letter code: Cytochrome c-type biogenesis protein CcmE (163 aa).

The Cytoplasmic segment spans residues 1–8 (MNPRRKKR). A helical; Signal-anchor for type II membrane protein membrane pass occupies residues 9–29 (LTIILAISAGLAAVIGLVLYA). At 30-163 (LSQNIDLFYT…TEAQLKGAKQ (134 aa)) the chain is on the periplasmic side. His131 and Tyr135 together coordinate heme.

This sequence belongs to the CcmE/CycJ family.

Its subcellular location is the cell inner membrane. Heme chaperone required for the biogenesis of c-type cytochromes. Transiently binds heme delivered by CcmC and transfers the heme to apo-cytochromes in a process facilitated by CcmF and CcmH. The sequence is that of Cytochrome c-type biogenesis protein CcmE from Aeromonas salmonicida (strain A449).